The chain runs to 420 residues: MAPK/MAK/MRK overlapping kinase (420 aa).

A Protein kinase domain is found at 4–285 (YKAIGKIGEG…AHQALQHPYF (282 aa)). ATP is bound by residues 10-18 (IGEGTFSEV) and Lys33. The active-site Proton acceptor is Asp128. Residues 311-322 (PESSSHNWSFSQ) show a composition bias toward polar residues. A disordered region spans residues 311 to 344 (PESSSHNWSFSQEGRKQKQSLRHEEGHARRQGPT). Residues 323–338 (EGRKQKQSLRHEEGHA) show a composition bias toward basic and acidic residues.

The protein belongs to the protein kinase superfamily. CMGC Ser/Thr protein kinase family. CDC2/CDKX subfamily. Mg(2+) serves as cofactor. Autophosphorylated. As to expression, highly expressed in testis, and less in kidney, brain and lung.

The protein resides in the cytoplasm. Its subcellular location is the cell projection. The protein localises to the cilium. It localises to the nucleus. It carries out the reaction L-seryl-[protein] + ATP = O-phospho-L-seryl-[protein] + ADP + H(+). It catalyses the reaction L-threonyl-[protein] + ATP = O-phospho-L-threonyl-[protein] + ADP + H(+). Its activity is regulated as follows. Phosphorylation appears to increase the enzymatic activity. In terms of biological role, able to phosphorylate several exogenous substrates and to undergo autophosphorylation. Negatively regulates cilium length in a cAMP and mTORC1 signaling-dependent manner. This chain is MAPK/MAK/MRK overlapping kinase (Mok), found in Mus musculus (Mouse).